The following is an 82-amino-acid chain: Progonadoliberin-3 (82 aa).

Residues 1-23 (MDLSNRTVVQVVVLALVAQVTLS) form the signal peptide. Q24 carries the post-translational modification Pyrrolidone carboxylic acid. G33 is modified (glycine amide).

Belongs to the GnRH family.

Its subcellular location is the secreted. Stimulates the secretion of gonadotropins. This Salmo trutta (Brown trout) protein is Progonadoliberin-3 (gnrh3).